Consider the following 229-residue polypeptide: 2-C-methyl-D-erythritol 4-phosphate cytidylyltransferase (229 aa).

Belongs to the IspD/TarI cytidylyltransferase family. IspD subfamily.

It catalyses the reaction 2-C-methyl-D-erythritol 4-phosphate + CTP + H(+) = 4-CDP-2-C-methyl-D-erythritol + diphosphate. The protein operates within isoprenoid biosynthesis; isopentenyl diphosphate biosynthesis via DXP pathway; isopentenyl diphosphate from 1-deoxy-D-xylulose 5-phosphate: step 2/6. In terms of biological role, catalyzes the formation of 4-diphosphocytidyl-2-C-methyl-D-erythritol from CTP and 2-C-methyl-D-erythritol 4-phosphate (MEP). The sequence is that of 2-C-methyl-D-erythritol 4-phosphate cytidylyltransferase from Neisseria meningitidis serogroup C / serotype 2a (strain ATCC 700532 / DSM 15464 / FAM18).